The primary structure comprises 584 residues: Alpha-glucosidase MAL32 (584 aa).

Asp-214 functions as the Nucleophile in the catalytic mechanism. The active-site Proton donor is Glu-276.

Belongs to the glycosyl hydrolase 13 family.

It catalyses the reaction Hydrolysis of terminal, non-reducing (1-&gt;4)-linked alpha-D-glucose residues with release of alpha-D-glucose.. This is Alpha-glucosidase MAL32 (MAL32) from Saccharomyces cerevisiae (strain ATCC 204508 / S288c) (Baker's yeast).